The chain runs to 380 residues: Cytochrome b (380 aa).

Helical transmembrane passes span 33 to 53 (FGSL…FLAM), 77 to 98 (WLIR…YLHV), 113 to 133 (WNIG…GYVL), and 178 to 198 (FFAF…IHLL). The heme b site is built by histidine 83 and histidine 97. Residues histidine 182 and histidine 196 each contribute to the heme b site. A ubiquinone is bound at residue histidine 201. 4 helical membrane passes run 226 to 246 (YKDL…ALFS), 288 to 308 (LGGV…PMLH), 320 to 340 (PSQI…WIGG), and 347 to 367 (FVLI…IALP).

It belongs to the cytochrome b family. The cytochrome bc1 complex contains 3 respiratory subunits (MT-CYB, CYC1 and UQCRFS1), 2 core proteins (UQCRC1 and UQCRC2) and probably 6 low-molecular weight proteins. The cofactor is heme b.

It localises to the mitochondrion inner membrane. In terms of biological role, component of the ubiquinol-cytochrome c reductase complex (complex III or cytochrome b-c1 complex) that is part of the mitochondrial respiratory chain. The b-c1 complex mediates electron transfer from ubiquinol to cytochrome c. Contributes to the generation of a proton gradient across the mitochondrial membrane that is then used for ATP synthesis. The chain is Cytochrome b (mt-cyb) from Acipenser sinensis (Chinese sturgeon).